The chain runs to 227 residues: DNA repair protein RecO (227 aa).

Belongs to the RecO family.

Functionally, involved in DNA repair and RecF pathway recombination. The protein is DNA repair protein RecO of Pseudomonas putida (strain GB-1).